A 266-amino-acid chain; its full sequence is UPF0354 protein lwe1624 (266 aa).

Belongs to the UPF0354 family.

The sequence is that of UPF0354 protein lwe1624 from Listeria welshimeri serovar 6b (strain ATCC 35897 / DSM 20650 / CCUG 15529 / CIP 8149 / NCTC 11857 / SLCC 5334 / V8).